The primary structure comprises 314 residues: uncharacterized protein (314 aa).

2 stretches are compositionally biased toward basic residues: residues 1 to 16 (MAGNSKRRGAVRKAGT) and 49 to 65 (AAKRAAKAAKQQQRRPA). The disordered stretch occupies residues 1 to 73 (MAGNSKRRGA…PARKTDETEL (73 aa)). S-adenosyl-L-methionine is bound by residues G266, I286, and L295.

Belongs to the class IV-like SAM-binding methyltransferase superfamily. RNA methyltransferase TrmH family.

This is an uncharacterized protein from Mycobacterium sp. (strain KMS).